A 273-amino-acid chain; its full sequence is Urease accessory protein UreD (273 aa).

A disordered region spans residues 1 to 29 (MLMRTATPLDQPRAIGSARVSSKRVNGGS).

It belongs to the UreD family. As to quaternary structure, ureD, UreF and UreG form a complex that acts as a GTP-hydrolysis-dependent molecular chaperone, activating the urease apoprotein by helping to assemble the nickel containing metallocenter of UreC. The UreE protein probably delivers the nickel.

The protein localises to the cytoplasm. Required for maturation of urease via the functional incorporation of the urease nickel metallocenter. In Roseobacter denitrificans (strain ATCC 33942 / OCh 114) (Erythrobacter sp. (strain OCh 114)), this protein is Urease accessory protein UreD.